Reading from the N-terminus, the 198-residue chain is V-type ATP synthase subunit E (198 aa).

This sequence belongs to the V-ATPase E subunit family.

Functionally, produces ATP from ADP in the presence of a proton gradient across the membrane. The chain is V-type ATP synthase subunit E from Clostridium novyi (strain NT).